We begin with the raw amino-acid sequence, 101 residues long: Iron-sulfur cluster assembly protein CyaY (101 aa).

Belongs to the frataxin family.

Its function is as follows. Involved in iron-sulfur (Fe-S) cluster assembly. May act as a regulator of Fe-S biogenesis. In Haemophilus influenzae (strain PittEE), this protein is Iron-sulfur cluster assembly protein CyaY.